We begin with the raw amino-acid sequence, 391 residues long: Cold-shock protein CS120 (391 aa).

Tandem repeats lie at residues 9–31, 49–62, 72–94, 95–108, 115–128, 135–148, 156–178, 179–192, 199–212, 220–242, 243–256, 263–276, 284–306, 307–320, 327–340, 350–363, and 374–391. The segment at 9–391 is 6 X 23 AA approximate repeats; the sequence is GEKKGIMEKI…KIKDKLPGQH (383 aa). A compositionally biased stretch (basic and acidic residues) spans 21 to 33; that stretch reads KLPGGHGDHKETA. Residues 21-391 form a disordered region; that stretch reads KLPGGHGDHK…KIKDKLPGQH (371 aa). Positions 34-59 are enriched in low complexity; the sequence is GTHGHPGTATHGAPATGGAYGQQGHA. An 11 X 14 AA approximate repeats region spans residues 49–363; that stretch reads TGGAYGQQGH…HGQHGHTGTT (315 aa). Residues 70–92 are compositionally biased toward basic and acidic residues; the sequence is HAGEKKGVMENIKDKLPGGHQDH. Over residues 93–145 the composition is skewed to low complexity; sequence QQTGGTYGQQGHTGTATHGTPATGGTYGQQGHTGTATHGTPATGGTYGEQGHT. The segment covering 155–176 has biased composition (basic and acidic residues); it reads TGEKKGVMENIKEKLPGGHGDH. A compositionally biased stretch (low complexity) spans 177 to 196; it reads QQTGGTYGQQGHTGTATHGT. The span at 219–240 shows a compositional bias: basic and acidic residues; the sequence is TGEKKGVMENIKDKLPGGHGDH. Composition is skewed to low complexity over residues 241–260 and 272–282; these read QQTG…TQGT and HTGMTGAGTHS. A compositionally biased stretch (basic and acidic residues) spans 283–304; the sequence is TGEKKGVMENIKEKLPGGHSDH. 2 stretches are compositionally biased toward low complexity: residues 305–324 and 333–351; these read QQTG…THGT and QHGH…TATG. The segment covering 361 to 372 has biased composition (gly residues); the sequence is GTTGTGTHGSDG. The span at 373–391 shows a compositional bias: basic and acidic residues; that stretch reads IGEKKSLMDKIKDKLPGQH.

It belongs to the plant dehydrin family.

May reduce intracellular freezing damage during winter by hydrogen-bonding to the lattice of the nascent ice crystals, thus modifying the structure and/or propagation of ice crystals. The chain is Cold-shock protein CS120 (CS120) from Triticum aestivum (Wheat).